Reading from the N-terminus, the 241-residue chain is Uridylate kinase (241 aa).

ATP contacts are provided by residues 10-13, Gly-53, and Arg-57; that span reads KLSG. Residues Asp-72 and 133-140 each bind UMP; that span reads AGSPYFST. The ATP site is built by Asn-161, Tyr-167, and Asp-170.

Belongs to the UMP kinase family. In terms of assembly, homohexamer.

It is found in the cytoplasm. The enzyme catalyses UMP + ATP = UDP + ADP. It participates in pyrimidine metabolism; CTP biosynthesis via de novo pathway; UDP from UMP (UMPK route): step 1/1. Its activity is regulated as follows. Inhibited by UTP. Its function is as follows. Catalyzes the reversible phosphorylation of UMP to UDP. This is Uridylate kinase from Aster yellows witches'-broom phytoplasma (strain AYWB).